We begin with the raw amino-acid sequence, 250 residues long: tRNA (guanine-N(1)-)-methyltransferase (250 aa).

S-adenosyl-L-methionine is bound by residues Gly114 and 134 to 139 (IGDYVL).

This sequence belongs to the RNA methyltransferase TrmD family. In terms of assembly, homodimer.

It localises to the cytoplasm. It catalyses the reaction guanosine(37) in tRNA + S-adenosyl-L-methionine = N(1)-methylguanosine(37) in tRNA + S-adenosyl-L-homocysteine + H(+). In terms of biological role, specifically methylates guanosine-37 in various tRNAs. This chain is tRNA (guanine-N(1)-)-methyltransferase, found in Moorella thermoacetica (strain ATCC 39073 / JCM 9320).